A 164-amino-acid chain; its full sequence is Nucleotide-binding protein Daro_3028 (164 aa).

Belongs to the YajQ family.

Nucleotide-binding protein. The sequence is that of Nucleotide-binding protein Daro_3028 from Dechloromonas aromatica (strain RCB).